Here is an 89-residue protein sequence, read N- to C-terminus: UPF0335 protein RPC_3979 (89 aa).

It belongs to the UPF0335 family.

The polypeptide is UPF0335 protein RPC_3979 (Rhodopseudomonas palustris (strain BisB18)).